A 763-amino-acid polypeptide reads, in one-letter code: Xaa-Pro dipeptidyl-peptidase (763 aa).

Catalysis depends on charge relay system residues serine 348, aspartate 468, and histidine 498.

It belongs to the peptidase S15 family. Homodimer.

Its subcellular location is the cytoplasm. The enzyme catalyses Hydrolyzes Xaa-Pro-|- bonds to release unblocked, N-terminal dipeptides from substrates including Ala-Pro-|-p-nitroanilide and (sequentially) Tyr-Pro-|-Phe-Pro-|-Gly-Pro-|-Ile.. Its function is as follows. Removes N-terminal dipeptides sequentially from polypeptides having unsubstituted N-termini provided that the penultimate residue is proline. The sequence is that of Xaa-Pro dipeptidyl-peptidase (pepX) from Lactococcus lactis subsp. cremoris (Streptococcus cremoris).